The chain runs to 388 residues: Single-stranded DNA-binding protein 3 (388 aa).

Position 1 is an N-acetylmethionine (Met1). One can recognise a LisH domain in the interval 16 to 48 (AREKLALYVYEYLLHVGAQKSAQTFLSEIRWEK). The tract at residues 101–388 (VLGNIPPNDG…NYSPSMTMSV (288 aa)) is disordered. The span at 126 to 139 (GSQPSPHAQPPPHN) shows a compositional bias: pro residues. Arg155, Arg161, and Arg165 each carry asymmetric dimethylarginine. Low complexity-rich tracts occupy residues 200–209 (MQRMNPPRGM) and 250–268 (PNSA…TYVG). Over residues 272 to 282 (GGGPPGTPIMP) the composition is skewed to pro residues. A compositionally biased stretch (polar residues) spans 285 to 296 (ADSTNSSDNIYT). A compositionally biased stretch (gly residues) spans 315–325 (GSDGPMGGMGG). A compositionally biased stretch (low complexity) spans 346–357 (NSPNNISGISNP). Residues Ser347, Ser352, and Ser355 each carry the phosphoserine modification. Thr360 bears the Phosphothreonine mark. The span at 373–388 (HSFQNDNYSPSMTMSV) shows a compositional bias: polar residues. Phosphoserine is present on residues Ser381 and Ser387.

As to expression, highly expressed in all hematopoietic tissues, including spleen, lymph node, peripheral blood, bone marrow, thymus, and fetal liver, with highest expression in thymus and fetal liver. Expression is also high in heart, brain, kidney, and skeletal muscle.

Its subcellular location is the nucleus. Its function is as follows. May be involved in transcription regulation of the alpha 2(I) collagen gene where it binds to the single-stranded polypyrimidine sequences in the promoter region. The protein is Single-stranded DNA-binding protein 3 (SSBP3) of Homo sapiens (Human).